We begin with the raw amino-acid sequence, 152 residues long: Protein-export protein SecB (152 aa).

Belongs to the SecB family. As to quaternary structure, homotetramer, a dimer of dimers. One homotetramer interacts with 1 SecA dimer.

The protein localises to the cytoplasm. In terms of biological role, one of the proteins required for the normal export of preproteins out of the cell cytoplasm. It is a molecular chaperone that binds to a subset of precursor proteins, maintaining them in a translocation-competent state. It also specifically binds to its receptor SecA. This chain is Protein-export protein SecB, found in Thiobacillus denitrificans (strain ATCC 25259 / T1).